Here is a 417-residue protein sequence, read N- to C-terminus: NADH-quinone oxidoreductase subunit D (417 aa).

This sequence belongs to the complex I 49 kDa subunit family. In terms of assembly, NDH-1 is composed of 14 different subunits. Subunits NuoB, C, D, E, F, and G constitute the peripheral sector of the complex.

It is found in the cell inner membrane. The enzyme catalyses a quinone + NADH + 5 H(+)(in) = a quinol + NAD(+) + 4 H(+)(out). In terms of biological role, NDH-1 shuttles electrons from NADH, via FMN and iron-sulfur (Fe-S) centers, to quinones in the respiratory chain. The immediate electron acceptor for the enzyme in this species is believed to be ubiquinone. Couples the redox reaction to proton translocation (for every two electrons transferred, four hydrogen ions are translocated across the cytoplasmic membrane), and thus conserves the redox energy in a proton gradient. This is NADH-quinone oxidoreductase subunit D from Chromobacterium violaceum (strain ATCC 12472 / DSM 30191 / JCM 1249 / CCUG 213 / NBRC 12614 / NCIMB 9131 / NCTC 9757 / MK).